Consider the following 71-residue polypeptide: cAMP-dependent protein kinase inhibitor beta (71 aa).

The disordered stretch occupies residues M1–N21. T2 bears the Blocked amino end (Thr) mark. At S35 the chain carries Phosphoserine. Positions A51–K71 are disordered.

Belongs to the PKI family. In terms of tissue distribution, testis.

Functionally, extremely potent competitive inhibitor of cAMP-dependent protein kinase activity, this protein interacts with the catalytic subunit of the enzyme after the cAMP-induced dissociation of its regulatory chains. In Rattus norvegicus (Rat), this protein is cAMP-dependent protein kinase inhibitor beta (Pkib).